Here is a 507-residue protein sequence, read N- to C-terminus: MVTIRADEISNIIRERIEQYNREVKIVNTGTVLQVGDGIARIHGLDEVMAGELVEFEEGTIGIALNLESNNVGVVLMGDGLMIQEGSSVKATGKIAQIPVSEAYLGRVINALAKPIDGRGEISASESRLIESPAPGIISRRSVYEPLQTGLIAIDSMIPIGRGQRELIIGDRQTGKTAVATDTILNQQGQNVICVYVAIGQKASSVAQVVTTFQERGAMEYTIVVAETADSPATLQYLAPYTGAALAEYFMYRERHTLIIYDDLSKQAQAYRQMSLLLRRPPGREAYPGDVFYLHSRLLERAAKSSSQLGEGSMTALPIVETQSGDVSAYIPTNVISITDGQIFLSADLFNAGIRPAINVGISVSRVGSAAQIKAMKQVAGKSKLELAQFAELEAFAQFASDLDKATQNQLARGQRLRELLKQSQSAPLTVAEQISTIYTGTNGYLDSLEIGQVRKFLVELRTYLKTNKPQFQEIISSTKTFTEEAETLLKDAIQDQMERFRLQEQL.

An ATP-binding site is contributed by 170–177 (GDRQTGKT).

This sequence belongs to the ATPase alpha/beta chains family. In terms of assembly, F-type ATPases have 2 components, CF(1) - the catalytic core - and CF(0) - the membrane proton channel. CF(1) has five subunits: alpha(3), beta(3), gamma(1), delta(1), epsilon(1). CF(0) has four main subunits: a, b, b' and c.

It is found in the plastid. The protein resides in the chloroplast thylakoid membrane. It catalyses the reaction ATP + H2O + 4 H(+)(in) = ADP + phosphate + 5 H(+)(out). Produces ATP from ADP in the presence of a proton gradient across the membrane. The alpha chain is a regulatory subunit. This chain is ATP synthase subunit alpha, chloroplastic, found in Gossypium hirsutum (Upland cotton).